Here is a 360-residue protein sequence, read N- to C-terminus: uncharacterized protein (360 aa).

In terms of domain architecture, THUMP spans 45–148; sequence EDIEDKILQI…KNKTYVSITP (104 aa).

This is an uncharacterized protein from Methanocaldococcus jannaschii (strain ATCC 43067 / DSM 2661 / JAL-1 / JCM 10045 / NBRC 100440) (Methanococcus jannaschii).